Reading from the N-terminus, the 234-residue chain is 2-C-methyl-D-erythritol 4-phosphate cytidylyltransferase (234 aa).

Belongs to the IspD/TarI cytidylyltransferase family. IspD subfamily.

The catalysed reaction is 2-C-methyl-D-erythritol 4-phosphate + CTP + H(+) = 4-CDP-2-C-methyl-D-erythritol + diphosphate. It functions in the pathway isoprenoid biosynthesis; isopentenyl diphosphate biosynthesis via DXP pathway; isopentenyl diphosphate from 1-deoxy-D-xylulose 5-phosphate: step 2/6. Its function is as follows. Catalyzes the formation of 4-diphosphocytidyl-2-C-methyl-D-erythritol from CTP and 2-C-methyl-D-erythritol 4-phosphate (MEP). This Syntrophus aciditrophicus (strain SB) protein is 2-C-methyl-D-erythritol 4-phosphate cytidylyltransferase.